The chain runs to 172 residues: RNA silencing suppressor p19 (172 aa).

A disordered region spans residues Glu-153 to Glu-172.

It belongs to the tombusvirus protein p19 family. Homodimer.

Its function is as follows. Viral suppressor of RNA silencing which binds specifically to silencing RNAs (siRNAs). Acts as a molecular caliper to specifically select siRNAs based on the length of the duplex region of the RNA. The sequence is that of RNA silencing suppressor p19 from Pelargonium zonale (PeNSV).